The chain runs to 412 residues: Gamma-glutamyl phosphate reductase (412 aa).

It belongs to the gamma-glutamyl phosphate reductase family.

The protein localises to the cytoplasm. The catalysed reaction is L-glutamate 5-semialdehyde + phosphate + NADP(+) = L-glutamyl 5-phosphate + NADPH + H(+). It participates in amino-acid biosynthesis; L-proline biosynthesis; L-glutamate 5-semialdehyde from L-glutamate: step 2/2. Functionally, catalyzes the NADPH-dependent reduction of L-glutamate 5-phosphate into L-glutamate 5-semialdehyde and phosphate. The product spontaneously undergoes cyclization to form 1-pyrroline-5-carboxylate. This Lactiplantibacillus plantarum (strain ATCC BAA-793 / NCIMB 8826 / WCFS1) (Lactobacillus plantarum) protein is Gamma-glutamyl phosphate reductase.